A 503-amino-acid chain; its full sequence is Legumin J (503 aa).

A signal peptide spans 1 to 22; that stretch reads MSKPFLSLLSLSLLLFASACLA. Disulfide bonds link Cys33–Cys66 and Cys109–Cys329. Residues 38–257 form the Cupin type-1 1 domain; that stretch reads INALEPDHRV…TFNTEEDTAK (220 aa). Disordered stretches follow at residues 111-140, 185-235, and 253-323; these read ETYE…RRFR, FYLG…EGNS, and EDTA…RKNG. Low complexity predominate over residues 118–129; the sequence is SSQSRQESRQQQ. Basic and acidic residues-rich tracts occupy residues 254 to 268 and 282 to 300; these read DTAK…ERSQ and KGKE…HREE. Positions 301 to 312 are enriched in acidic residues; the sequence is KEEEEEEEEDEE. A compositionally biased stretch (basic and acidic residues) spans 313–323; that stretch reads EKQRSEERKNG. A Cupin type-1 2 domain is found at 335–482; that stretch reads ENIADAARAD…AFGLRQRQVT (148 aa).

Belongs to the 11S seed storage protein (globulins) family. In terms of assembly, hexamer; each subunit is composed of an acidic and a basic chain derived from a single precursor and linked by a disulfide bond.

In terms of biological role, this protein found in the seeds of many leguminous and non-leguminous plants is the source of sulfur-containing amino acids in seed meals. The sequence is that of Legumin J (LEGJ) from Pisum sativum (Garden pea).